A 68-amino-acid chain; its full sequence is Sec-independent protein translocase protein TatA (68 aa).

Residues 1 to 21 traverse the membrane as a helical segment; the sequence is MGSFSIWHWLIVLAVVLLLFG. Residues 48–68 form a disordered region; that stretch reads AAAADKSIDGKTVDHKSDEVR. The span at 53 to 68 shows a compositional bias: basic and acidic residues; sequence KSIDGKTVDHKSDEVR.

This sequence belongs to the TatA/E family. As to quaternary structure, the Tat system comprises two distinct complexes: a TatABC complex, containing multiple copies of TatA, TatB and TatC subunits, and a separate TatA complex, containing only TatA subunits. Substrates initially bind to the TatABC complex, which probably triggers association of the separate TatA complex to form the active translocon.

Its subcellular location is the cell inner membrane. In terms of biological role, part of the twin-arginine translocation (Tat) system that transports large folded proteins containing a characteristic twin-arginine motif in their signal peptide across membranes. TatA could form the protein-conducting channel of the Tat system. The sequence is that of Sec-independent protein translocase protein TatA from Sinorhizobium medicae (strain WSM419) (Ensifer medicae).